The following is a 327-amino-acid chain: uncharacterized protein (327 aa).

The interval 129–306 is disordered; sequence TPLQNQEATT…DNKKTVTTSS (178 aa). The span at 130 to 144 shows a compositional bias: polar residues; sequence PLQNQEATTSPTIES. Basic and acidic residues-rich tracts occupy residues 184–196 and 233–276; these read KSVE…DRNV and TKDE…EKIV.

This is an uncharacterized protein from Caenorhabditis elegans.